The primary structure comprises 153 residues: Transcriptional repressor NrdR (153 aa).

A zinc finger lies at 3-33 (CPYCNYKESKVIDSRHTDLKSIRRRRECESC). The 91-residue stretch at 48 to 138 (LMVIKKDNSR…VYRQFKDINT (91 aa)) folds into the ATP-cone domain.

This sequence belongs to the NrdR family. Zn(2+) serves as cofactor.

Negatively regulates transcription of bacterial ribonucleotide reductase nrd genes and operons by binding to NrdR-boxes. This is Transcriptional repressor NrdR from Clostridioides difficile (strain 630) (Peptoclostridium difficile).